The following is a 132-amino-acid chain: Pro-MCH 1 (132 aa).

The first 24 residues, 1–24, serve as a signal peptide directing secretion; the sequence is MRHSVLSISFAVALFLECYTPSTA. A disulfide bridge connects residues cysteine 120 and cysteine 129.

This sequence belongs to the melanin-concentrating hormone family. In terms of tissue distribution, pituitary gland. Produced in neurons of lateral basal hypothalamus which project both to the brain and to the neural lobe of the pituitary gland from where MCH is released.

Plays a role in skin pigmentation by antagonizing the action of melanotropin alpha. Induces melanin concentration within the melanophores. May participate in the control of the hypothalamo-pituitary adrenal gland axis by inhibiting the release of ACTH. This Oncorhynchus mykiss (Rainbow trout) protein is Pro-MCH 1 (mch1).